A 233-amino-acid polypeptide reads, in one-letter code: Auxin-responsive protein IAA11 (233 aa).

Disordered stretches follow at residues 1 to 27 and 46 to 100; these read MAGL…RSSG and PAAV…PKAQ. Positions 11–15 match the EAR-like (transcriptional repression) motif; sequence LRLGL. The span at 54–63 shows a compositional bias: acidic residues; that stretch reads GAQEDKEDAD. The PB1 domain occupies 122–217; it reads AALVKVSMDG…SCKRLRIMKG (96 aa).

The protein belongs to the Aux/IAA family. Homodimers and heterodimers. Highly expressed in etiolated shoots. Expressed in roots.

It is found in the nucleus. Functionally, aux/IAA proteins are short-lived transcriptional factors that function as repressors of early auxin response genes at low auxin concentrations. In Oryza sativa subsp. japonica (Rice), this protein is Auxin-responsive protein IAA11 (IAA11).